A 247-amino-acid chain; its full sequence is Protein FAM133B (247 aa).

Disordered regions lie at residues 19 to 38 and 70 to 247; these read SRGP…NRPR and KKEL…PDSP. Basic and acidic residues predominate over residues 70–80; the sequence is KKELEKHREKL. Residue S82 is modified to Phosphoserine. A compositionally biased stretch (basic residues) spans 89 to 102; the sequence is KKRQRKKKEKKKSG. The span at 103-119 shows a compositional bias: low complexity; that stretch reads RYSSSSSSSSDSSSSSS. A compositionally biased stretch (basic residues) spans 128–140; that stretch reads QGKRRKKKKNRSH. Residues 165–176 are compositionally biased toward basic and acidic residues; the sequence is KDGTEKEKDIKG. A phosphoserine mark is found at S191, S192, S194, and S196. The span at 211-221 shows a compositional bias: basic and acidic residues; it reads SSEEREKATEK. Residues 222–239 show a composition bias toward basic residues; that stretch reads TKKKKKHKKHSKKKKKKA.

The protein belongs to the FAM133 family.

The chain is Protein FAM133B (FAM133B) from Homo sapiens (Human).